Here is a 716-residue protein sequence, read N- to C-terminus: Segment polarity protein dishevelled homolog DVL-3 (716 aa).

The region spanning 1–82 (MGETKIIYHL…RVVSWLVSAE (82 aa)) is the DIX domain. Arginine 27 bears the Omega-N-methylarginine mark. 2 positions are modified to phosphoserine: serine 48 and serine 125. The tract at residues 85-235 (HPDPAPFCAD…VSRIERSSSF (151 aa)) is disordered. Residues 142–156 (QRERPRRRDGPEHAT) are compositionally biased toward basic and acidic residues. The span at 175–190 (SSSTLMSSELETTSFF) shows a compositional bias: low complexity. Serine 192 is subject to Phosphoserine. A compositionally biased stretch (low complexity) spans 199–212 (SRFSSSTEQSSASR). Position 212 is an omega-N-methylarginine (arginine 212). Over residues 213–226 (LMRRHKRRRRKQKV) the composition is skewed to basic residues. Positions 249–321 (TVTLNMEKYN…NDDAVRVLRE (73 aa)) constitute a PDZ domain. Arginine 271 is subject to Asymmetric dimethylarginine; by PRMT1; alternate. Arginine 271 and arginine 342 each carry symmetric dimethylarginine; by PRMT7; alternate. Arginine 342 bears the Omega-N-methylarginine; alternate mark. The residue at position 346 (threonine 346) is a Phosphothreonine. Positions 422–496 (PESGLEVRDR…SEQCYYIFGD (75 aa)) constitute a DEP domain. Residues 546-691 (PYNPHPGFPE…PPGRDLASVP (146 aa)) form a disordered region. Positions 565 to 581 (ASSQHSEGSRSSGSNRS) are enriched in low complexity. Composition is skewed to basic and acidic residues over residues 582-595 (GSDR…KAGD) and 604-622 (ESDH…RAPS). Arginine 614 bears the Symmetric dimethylarginine; by PRMT7 mark. A compositionally biased stretch (pro residues) spans 653 to 682 (YGPPGVPPLYGPPMLMMPPPPAAMGPPGAP). Serine 697 carries the phosphoserine modification. Omega-N-methylarginine; alternate is present on arginine 698. Arginine 698 is subject to Dimethylated arginine; alternate. Serine 700 is modified (phosphoserine).

The protein belongs to the DSH family. As to quaternary structure, interacts (via the PDZ domain) with the C-terminal regions of VANGL1 and VANGL2. Interacts (via the region containing both the PDZ and DEP domains) with LRRFIP2; the DIX domain may inhibit this interaction. Interacts with CYLD, CEP164 and DAB2. Interacts with DCDC2. Interacts with FOXK1 and FOXK2. Interacts with DAAM2. In terms of processing, ubiquitinated. Deubiquitinated by CYLD, which acts on 'Lys-63'-linked ubiquitin chains. Post-translationally, phosphorylated by CSNK1D. Arginine methylation may function as a switch in regulation of function in Wnt signaling.

The protein localises to the cytoplasm. In terms of biological role, involved in the signal transduction pathway mediated by multiple Wnt genes. The chain is Segment polarity protein dishevelled homolog DVL-3 (DVL3) from Homo sapiens (Human).